The primary structure comprises 420 residues: Bicoumarin synthase ktnC (420 aa).

Position 362 (C362) interacts with heme.

Belongs to the cytochrome P450 family. Requires heme as cofactor.

The enzyme catalyses 2 7-demethylsiderin + NADPH + O2 = orlandin + NADP(+) + 2 H2O. The protein operates within secondary metabolite biosynthesis. Its function is as follows. Non-reducing polyketide synthase; part of the gene cluster that mediates the biosynthesis of the bicoumarin kotanin. The non-reducing polyketide synthase ktnS first catalyzes the formation of the pentaketidic 4,7-dihydroxy-5-methylcoumarin from acetyl coenzyme A and 4 malonyl coenzyme A molecules. Further O-methylation by ktnB leads to the formation of 7-demethylsiderin. Then, an oxidative phenol coupling catalyzed by the cytochrome P450 monooxygenase ktnC forms the 8,8'-dimer P-orlandin via dimerization the monomeric precursor, 7-demethylsiderin. P-orlandin is subsequently O-methylated in a stepwise fashion to demethylkotanin and kotanin. The sequence is that of Bicoumarin synthase ktnC from Aspergillus niger (strain ATCC MYA-4892 / CBS 513.88 / FGSC A1513).